A 251-amino-acid polypeptide reads, in one-letter code: uncharacterized protein (251 aa).

This is an uncharacterized protein from Acanthamoeba polyphaga mimivirus (APMV).